We begin with the raw amino-acid sequence, 253 residues long: Phycocyanobilin:ferredoxin oxidoreductase (253 aa).

This sequence belongs to the HY2 family.

The enzyme catalyses (2R,3Z)-phycocyanobilin + 4 oxidized [2Fe-2S]-[ferredoxin] = biliverdin IXalpha + 4 reduced [2Fe-2S]-[ferredoxin] + 4 H(+). In terms of biological role, catalyzes the four-electron reduction of biliverdin IX-alpha (2-electron reduction at both the A and D rings); the reaction proceeds via an isolatable 2-electron intermediate, 181,182-dihydrobiliverdin. The sequence is that of Phycocyanobilin:ferredoxin oxidoreductase (pcyA) from Gloeobacter violaceus (strain ATCC 29082 / PCC 7421).